A 183-amino-acid polypeptide reads, in one-letter code: Dual-action ribosomal maturation protein DarP (183 aa).

This sequence belongs to the DarP family.

It localises to the cytoplasm. In terms of biological role, member of a network of 50S ribosomal subunit biogenesis factors which assembles along the 30S-50S interface, preventing incorrect 23S rRNA structures from forming. Promotes peptidyl transferase center (PTC) maturation. This Salmonella enteritidis PT4 (strain P125109) protein is Dual-action ribosomal maturation protein DarP.